Here is a 157-residue protein sequence, read N- to C-terminus: WPP domain-containing protein 3 (157 aa).

Positions 1–20 (MAETADTINTTVSTPQPQLE) are enriched in polar residues. The segment at 1–41 (MAETADTINTTVSTPQPQLESRSDETSCLQKHRSDATSEVT) is disordered. Residues 32 to 41 (HRSDATSEVT) are compositionally biased toward basic and acidic residues. Residues 37 to 138 (TSEVTKEEKS…IESAEVRFKA (102 aa)) are WPP; degenerate.

In terms of tissue distribution, expressed in roots, stems and leaves.

Its subcellular location is the cytoplasm. The protein localises to the nucleus. Its function is as follows. Regulates the mitotic activity in roots. The sequence is that of WPP domain-containing protein 3 (WPP3) from Arabidopsis thaliana (Mouse-ear cress).